Reading from the N-terminus, the 321-residue chain is MGEWTILERLLEAAVQQHSTMIGRILLTVVVIFRILIVAIVGETVYDDEQTMFVCNTLQPGCNQACYDRAFPISHIRYWVFQIIMVCTPSLCFITYSVHQSAKQRERRYSTVFLALDRDPAESIGGPGGTGGGGSGGSKREDKKLQNAIVNGVLQNTETTSKETEPDCLEVKELTPHPSGLRTAARSKLRRQEGISRFYIIQVVFRNALEIGFLVGQYFLYGFSVPGLYECNRYPCIKEVECYVSRPTEKTVFLVFMFAVSGICVVLNLAELNHLGWRKIKLAVRGAQAKRKSVYEIRNKDLPRVSVPNFGRTQSSDSAYV.

The Cytoplasmic segment spans residues 1-19 (MGEWTILERLLEAAVQQHS). The chain crosses the membrane as a helical span at residues 20-42 (TMIGRILLTVVVIFRILIVAIVG). Residues 43 to 75 (ETVYDDEQTMFVCNTLQPGCNQACYDRAFPISH) are Extracellular-facing. A helical membrane pass occupies residues 76–98 (IRYWVFQIIMVCTPSLCFITYSV). Topologically, residues 99–197 (HQSAKQRERR…KLRRQEGISR (99 aa)) are cytoplasmic. A disordered region spans residues 120–141 (PAESIGGPGGTGGGGSGGSKRE). Positions 125–137 (GGPGGTGGGGSGG) are enriched in gly residues. The chain crosses the membrane as a helical span at residues 198-220 (FYIIQVVFRNALEIGFLVGQYFL). Residues 221 to 252 (YGFSVPGLYECNRYPCIKEVECYVSRPTEKTV) are Extracellular-facing. A helical membrane pass occupies residues 253 to 275 (FLVFMFAVSGICVVLNLAELNHL). The Cytoplasmic portion of the chain corresponds to 276–321 (GWRKIKLAVRGAQAKRKSVYEIRNKDLPRVSVPNFGRTQSSDSAYV).

Belongs to the connexin family. Delta-type subfamily. In terms of assembly, a connexon is composed of a hexamer of connexins. In terms of tissue distribution, highly expressed in neurons.

It is found in the cell membrane. The protein resides in the cell junction. Its subcellular location is the gap junction. Functionally, one gap junction consists of a cluster of closely packed pairs of transmembrane channels, the connexons, through which materials of low MW diffuse from one cell to a neighboring cell. The sequence is that of Gap junction delta-2 protein (Gjd2) from Mus musculus (Mouse).